A 152-amino-acid polypeptide reads, in one-letter code: Protein Turandot X (152 aa).

Residues 1–22 form the signal peptide; sequence MGFYISSLLICVFLGIVRFASA.

This sequence belongs to the Turandot family.

It is found in the secreted. A humoral factor that may play a role in stress tolerance. The polypeptide is Protein Turandot X (Drosophila erecta (Fruit fly)).